The chain runs to 1191 residues: Zinc finger protein ush (1191 aa).

Disordered stretches follow at residues 1–153 (MLSS…PKYP) and 169–194 (PDAK…DTQA). Basic and acidic residues predominate over residues 19–28 (VDSRDSKDLS). A compositionally biased stretch (acidic residues) spans 61–73 (IDDDADEDAEFEE). 2 positions are modified to phosphoserine: serine 116 and serine 118. The span at 130–151 (ATPPSEPEASPCPSPSPCPTPK) shows a compositional bias: pro residues. The CCHC FOG-type 1 zinc finger occupies 202 to 235 (LLKPARFMCLPCGIAFSSPSTLEAHQAYYCSHRI). 4 residues coordinate Zn(2+): cysteine 210, cysteine 213, histidine 226, and cysteine 231. A disordered region spans residues 239 to 274 (DEAGSDKSGAGGSGATAGDAAGLTGGSTEPPAKMAR). The span at 254–266 (TAGDAAGLTGGST) shows a compositional bias: low complexity. The C2H2-type 1 zinc finger occupies 279 to 301 (YGCTQCSYSADKKVSLNRHMRMH). Positions 304–338 (SPAAPTLAGLPSLLQNGIAPPGVTPNPMEDSSSQQ) are disordered. A CCHC FOG-type 2 zinc finger spans residues 335–368 (SSQQTDRYCSHCDIRFNNIKTYRAHKQHYCSSRR). The Zn(2+) site is built by cysteine 343, cysteine 346, histidine 359, and cysteine 364. Disordered regions lie at residues 361 to 413 (QHYC…ARNK), 504 to 540 (EPER…ESAP), and 601 to 635 (APSL…MSPP). Residues 383–394 (AGSGPGSAGGSI) are compositionally biased toward gly residues. Low complexity-rich tracts occupy residues 509-523 (SAPS…AKSS), 602-613 (PSLPSSPSMSPS), and 620-635 (SPRS…MSPP). 2 consecutive CCHC FOG-type zinc fingers follow at residues 720–753 (YVKK…SARS) and 791–824 (PVAY…PKGG). Zn(2+)-binding residues include cysteine 728, cysteine 731, histidine 744, cysteine 749, cysteine 799, cysteine 802, histidine 815, and cysteine 820. C2H2-type zinc fingers lie at residues 882-907 (NKCP…HGTV), 910-932 (YRCS…IRTH), and 983-1006 (FNCD…KLMH). The disordered stretch occupies residues 1011–1073 (INSPSISPDT…HENNNSPIAT (63 aa)). Residues serine 1013, serine 1015, and serine 1017 each carry the phosphoserine modification. Residues 1025-1040 (VTSNPTTNQHSNSDVS) are compositionally biased toward polar residues. The segment at 1113 to 1146 (AAEVMKKYCSTCDISFNYVKTYLAHKQFYCKNKP) adopts a CCHC FOG-type 5 zinc-finger fold. Residues cysteine 1121, cysteine 1124, histidine 1137, and cysteine 1142 each coordinate Zn(2+). Serine 1156 carries the post-translational modification Phosphoserine.

Belongs to the FOG (Friend of GATA) family. Interacts with pnr, although weak this interaction is essential. Interacts with the isoform SrpNC of srp. Interacts with CtBP corepressor. As to expression, first expressed in stage 5 at high levels in the primordium of the amnioserosa. Also expressed in germ band extending embryos in cells of the developing anterior and posterior midgut and in hemocyte precursors present in the cephalic mesoderm. In embryonic stage 8, it is expressed in blood cell precursors. By stage 10, it is expressed in hemocyte precursors that have spread throughout the lateral and ventral head mesoderm. By stage 11, it is expressed in the dorsal ectoderm and in precursor cells of the hemocytes and fat body. As embryogenesis proceeds, it is also expressed in stage 13 plasmatocytes migrating throughout the head mesoderm and down the ventral midline. By late embryogenesis, expression strongly decreases but remains in the dorsal ectoderm during dorsal closure, in cells within, or associated with, the central nervous system, and in plasmatocytes circulating throughout the embryonic hemolymph. During larval development, it is expressed in primary and secondary lobes of lymph glands. Expressed in the dorsal part of the thoracic imaginal disk.

Its subcellular location is the nucleus. Its function is as follows. Transcription regulator that modulates expression mediated by transcription factors of the GATA family such as pnr and srp. Represses transcription of proneural achaete-scute complex (AS-C), which is usually activated by pnr. Involved in cardiogenesis, blood, and eye development. During hematopoiesis, it is required to restrict the number of crystal cells, probably via its interaction with the isoform SrpNC of srp. Negatively regulates expression of sr. Probably acts by interacting with the GATA-type zinc finger of proteins such as pnr and srp, possibly antagonizing the interaction between the GATA-type zinc finger and some cofactor. The sequence is that of Zinc finger protein ush (ush) from Drosophila melanogaster (Fruit fly).